The primary structure comprises 345 residues: Protein RecA (345 aa).

65 to 72 (GPESSGKT) is a binding site for ATP.

Belongs to the RecA family.

Its subcellular location is the cytoplasm. Its function is as follows. Can catalyze the hydrolysis of ATP in the presence of single-stranded DNA, the ATP-dependent uptake of single-stranded DNA by duplex DNA, and the ATP-dependent hybridization of homologous single-stranded DNAs. It interacts with LexA causing its activation and leading to its autocatalytic cleavage. The protein is Protein RecA of Campylobacter fetus subsp. fetus (strain 82-40).